The following is a 304-amino-acid chain: Iron(III) enterobactin esterase (304 aa).

The signal sequence occupies residues 1–25 (MRTSLLVAALGLALAAALPGGAPLA). Catalysis depends on charge relay system residues serine 182, glutamate 242, and histidine 283.

This sequence belongs to the esterase D family. In terms of assembly, monomer.

The protein resides in the periplasm. The catalysed reaction is Fe(III)-enterobactin + 3 H2O + H(+) = Fe(III)-[N-(2,3-dihydroxybenzoyl)-L-serine] + 2 N-(2,3-dihydroxybenzoyl)-L-serine. It catalyses the reaction Fe(III)-enterobactin + H2O = Fe(III)-[N-(2,3-dihydroxybenzoyl)-L-serine]3 + H(+). It carries out the reaction Fe(III)-[N-(2,3-dihydroxybenzoyl)-L-serine]3 + H2O + H(+) = Fe(III)-[N-(2,3-dihydroxybenzoyl)-L-serine]2 + N-(2,3-dihydroxybenzoyl)-L-serine. The enzyme catalyses Fe(III)-[N-(2,3-dihydroxybenzoyl)-L-serine]2 + H2O + H(+) = Fe(III)-[N-(2,3-dihydroxybenzoyl)-L-serine] + N-(2,3-dihydroxybenzoyl)-L-serine. In terms of biological role, catalyzes the hydrolysis of ferric enterobactin (Fe-Ent). Hydrolyzes Fe-Ent into three molecules of 2,3-dihydroxybenzoylserine (DHBS) still complexed with ferric iron. Iron reduction is necessary to obtain complete release of the metal from DHBS. It can hydrolyze salmochelin S4 (diglucosyl-C-Ent) but is not involved in iron acquisition by this siderophore. This Pseudomonas aeruginosa (strain ATCC 15692 / DSM 22644 / CIP 104116 / JCM 14847 / LMG 12228 / 1C / PRS 101 / PAO1) protein is Iron(III) enterobactin esterase.